The sequence spans 281 residues: Large ribosomal subunit protein uL2 (281 aa).

A disordered region spans residues 223-281 (VRGSVMNPVDHPHGGGEGKQPVGRKSPLTPWGKIALGVKTRKTKKSSNKLILRRRKDAK). A compositionally biased stretch (basic residues) spans 261–281 (KTRKTKKSSNKLILRRRKDAK).

It belongs to the universal ribosomal protein uL2 family. Part of the 50S ribosomal subunit. Forms a bridge to the 30S subunit in the 70S ribosome.

Functionally, one of the primary rRNA binding proteins. Required for association of the 30S and 50S subunits to form the 70S ribosome, for tRNA binding and peptide bond formation. It has been suggested to have peptidyltransferase activity; this is somewhat controversial. Makes several contacts with the 16S rRNA in the 70S ribosome. This is Large ribosomal subunit protein uL2 from Mycoplasmopsis synoviae (strain 53) (Mycoplasma synoviae).